The sequence spans 135 residues: Phosphoribosyl-AMP cyclohydrolase (135 aa).

Asp-78 is a binding site for Mg(2+). Zn(2+) is bound at residue Cys-79. Mg(2+) is bound by residues Asp-80 and Asp-82. The Zn(2+) site is built by Cys-96 and Cys-103.

This sequence belongs to the PRA-CH family. As to quaternary structure, homodimer. Mg(2+) serves as cofactor. The cofactor is Zn(2+).

The protein resides in the cytoplasm. The catalysed reaction is 1-(5-phospho-beta-D-ribosyl)-5'-AMP + H2O = 1-(5-phospho-beta-D-ribosyl)-5-[(5-phospho-beta-D-ribosylamino)methylideneamino]imidazole-4-carboxamide. Its pathway is amino-acid biosynthesis; L-histidine biosynthesis; L-histidine from 5-phospho-alpha-D-ribose 1-diphosphate: step 3/9. Catalyzes the hydrolysis of the adenine ring of phosphoribosyl-AMP. This chain is Phosphoribosyl-AMP cyclohydrolase, found in Cupriavidus metallidurans (strain ATCC 43123 / DSM 2839 / NBRC 102507 / CH34) (Ralstonia metallidurans).